Here is a 240-residue protein sequence, read N- to C-terminus: RNA polymerase sigma factor SigI (240 aa).

A Polymerase core binding motif is present at residues 56–69; it reads DEYSIGLFAFNEAI. A DNA-binding region (H-T-H motif) is located at residues 194-213; that stretch reads LKHIEPRVRVSRKTLERHRK.

Belongs to the sigma-70 factor family. SigI subfamily. In terms of assembly, interacts with RsgI.

It localises to the cytoplasm. Its activity is regulated as follows. Negatively regulated by the anti-sigma-I factor RsgI. Functionally, sigma factors are initiation factors that promote the attachment of RNA polymerase to specific initiation sites and are then released. This sigma factor contributes to both stress response and virulence gene expression. The protein is RNA polymerase sigma factor SigI of Bacillus anthracis.